A 116-amino-acid chain; its full sequence is NADH-ubiquinone oxidoreductase chain 3 (116 aa).

3 helical membrane passes run 10 to 30 (FLTLFVSILIFLITTLITFAA), 64 to 84 (FFLVAILFLLFDLEIALLFPL), and 88 to 108 (VFFHPIHTPLILTVGLIFEWV).

Belongs to the complex I subunit 3 family.

The protein resides in the mitochondrion membrane. The enzyme catalyses a ubiquinone + NADH + 5 H(+)(in) = a ubiquinol + NAD(+) + 4 H(+)(out). In terms of biological role, core subunit of the mitochondrial membrane respiratory chain NADH dehydrogenase (Complex I) that is believed to belong to the minimal assembly required for catalysis. Complex I functions in the transfer of electrons from NADH to the respiratory chain. The immediate electron acceptor for the enzyme is believed to be ubiquinone. This chain is NADH-ubiquinone oxidoreductase chain 3 (ND3), found in Patiria pectinifera (Starfish).